The primary structure comprises 1820 residues: Cation channel sperm-associated targeting subunit tau (1820 aa).

A C2 domain is found at 87–222 (DSEELEITQE…QKGCFIEEVQ (136 aa)). Disordered stretches follow at residues 360 to 383 (SEET…ELEN), 403 to 443 (LLDN…TEVH), 695 to 722 (EVSM…SSME), and 838 to 857 (SSTK…SGSS). The segment covering 415–443 (PTLNQSDQDNSTADASKNDESTPSPTEVH) has biased composition (polar residues).

In terms of assembly, component of the CatSper complex or CatSpermasome composed of the core pore-forming members CATSPER1, CATSPER2, CATSPER3 and CATSPER4 as well as auxiliary members CATSPERB, CATSPERG, CATSPERD, CATSPERE, CATSPERZ, C2CD6/CATSPERT, TMEM249, TMEM262 and EFCAB9. HSPA1 may be an additional auxiliary complex member. The core complex members CATSPER1, CATSPER2, CATSPER3 and CATSPER4 form a heterotetrameric channel. The auxiliary CATSPERB, CATSPERG, CATSPERD and CATSPERE subunits form a pavilion-like structure over the pore which stabilizes the complex through interactions with CATSPER4, CATSPER3, CATSPER1 and CATSPER2 respectively. SLCO6C1 interacts with CATSPERE and TMEM262/CATSPERH interacts with CATSPERB, further stabilizing the complex. C2CD6/CATSPERT interacts at least with CATSPERD and is required for targeting the CatSper complex in the flagellar membrane. Expressed in testis (at protein level).

The protein localises to the cell projection. The protein resides in the cilium. It localises to the flagellum membrane. Its function is as follows. Auxiliary component of the CatSper complex, a complex involved in sperm cell hyperactivation. Sperm cell hyperactivation is needed for sperm motility which is essential late in the preparation of sperm for fertilization. Required for CatSper complex targeting and trafficking into the quadrilinear nanodomains. Targets the preassembled CatSper complexes to elongating flagella, where it links the channel-carrying vesicles and motor proteins. This is Cation channel sperm-associated targeting subunit tau from Homo sapiens (Human).